The chain runs to 615 residues: Chaperone protein DnaK (615 aa).

Thr-175 is subject to Phosphothreonine; by autocatalysis. The segment at 573 to 615 (SQEMYQKAAQEQQAAQGAEQAQDNGPKDDNVVDADFKEVDEDK) is disordered. Residues 580–594 (AAQEQQAAQGAEQAQ) show a composition bias toward low complexity. A compositionally biased stretch (basic and acidic residues) spans 597–609 (GPKDDNVVDADFK).

The protein belongs to the heat shock protein 70 family.

Its function is as follows. Acts as a chaperone. This chain is Chaperone protein DnaK, found in Clostridioides difficile (strain 630) (Peptoclostridium difficile).